The chain runs to 398 residues: S-adenosylmethionine synthase (398 aa).

Histidine 16 lines the ATP pocket. Aspartate 18 lines the Mg(2+) pocket. K(+) is bound at residue glutamate 51. Positions 64 and 108 each coordinate L-methionine. The interval 108–118 is flexible loop; the sequence is QSADIAQGVDA. Residues 176 to 178, 242 to 243, aspartate 251, 257 to 258, alanine 274, and lysine 278 contribute to the ATP site; these read DSK, KF, and RK. Residue aspartate 251 coordinates L-methionine. Lysine 282 is an L-methionine binding site.

The protein belongs to the AdoMet synthase family. As to quaternary structure, homotetramer; dimer of dimers. Mg(2+) serves as cofactor. Requires K(+) as cofactor.

Its subcellular location is the cytoplasm. It carries out the reaction L-methionine + ATP + H2O = S-adenosyl-L-methionine + phosphate + diphosphate. It functions in the pathway amino-acid biosynthesis; S-adenosyl-L-methionine biosynthesis; S-adenosyl-L-methionine from L-methionine: step 1/1. Functionally, catalyzes the formation of S-adenosylmethionine (AdoMet) from methionine and ATP. The overall synthetic reaction is composed of two sequential steps, AdoMet formation and the subsequent tripolyphosphate hydrolysis which occurs prior to release of AdoMet from the enzyme. The sequence is that of S-adenosylmethionine synthase from Rhodopseudomonas palustris (strain HaA2).